The chain runs to 629 residues: tRNA uridine 5-carboxymethylaminomethyl modification enzyme MnmG (629 aa).

FAD contacts are provided by residues 18–23 (GGGHAG), Val-130, and Ser-188. Position 280–294 (280–294 (GPRYCPSIEDKVVRF)) interacts with NAD(+). Gln-377 lines the FAD pocket.

This sequence belongs to the MnmG family. Homodimer. Heterotetramer of two MnmE and two MnmG subunits. The cofactor is FAD.

It localises to the cytoplasm. In terms of biological role, NAD-binding protein involved in the addition of a carboxymethylaminomethyl (cmnm) group at the wobble position (U34) of certain tRNAs, forming tRNA-cmnm(5)s(2)U34. The chain is tRNA uridine 5-carboxymethylaminomethyl modification enzyme MnmG from Granulibacter bethesdensis (strain ATCC BAA-1260 / CGDNIH1).